A 515-amino-acid chain; its full sequence is MNACASASSLHSLSPAVAPQEPYLLEVLNVSKGFPGVVALANVQLRVRPGTVLALMGENGAGKSTLMKIIAGIYQPDSGELRLKGRPVTFATPLAALQAGIAMIHQELNLMPHMSIAENIWIGREQQNRLGLIDHREMHRCTAALLARLRIELDPEEQVGNLSIAERQMVEIAKAVSYDSDVLIMDEPTSAITDKEVAHLFSIIADLKAQGKGIVYITHKMNEVFAIADEVAVFRDGAYIGLQRADSLDGDSLISMMVGRELSQLFPLREKPIGELLLKVRDLRLDGVFKGVSFDLHAGEILGIAGLMGSGRTNVAETLFGITPSDGGEIVLDGQPLRIGDPHRAIEKGLALLTEDRKLSGLFPCLSVLENMEVAVLPHYAGGGFVQQKALRALCEDMCRKLRVKTPSLEQCIDTLSGGNQQKALLARWLMTQPRILILDEPTRGIDVGAKAEIYRLIASLAGEGMAVIMISSELPEVLGMSDRVMVMHEGQLMGTLDRNEATQERVMQLASGLN.

2 consecutive ABC transporter domains span residues 25 to 261 (LEVL…VGRE) and 268 to 515 (LREK…SGLN). 57–64 (GENGAGKS) provides a ligand contact to ATP.

It belongs to the ABC transporter superfamily. Carbohydrate importer 2 (CUT2) (TC 3.A.1.2) family.

It localises to the cell inner membrane. It catalyses the reaction D-ribose(out) + ATP + H2O = D-ribose(in) + ADP + phosphate + H(+). It carries out the reaction D-galactose(out) + ATP + H2O = D-galactose(in) + ADP + phosphate + H(+). Its function is as follows. Part of an ABC transporter complex involved in carbohydrate import. Could be involved in ribose, galactose and/or methyl galactoside import. Responsible for energy coupling to the transport system. In Pseudomonas fluorescens (strain ATCC BAA-477 / NRRL B-23932 / Pf-5), this protein is Putative ribose/galactose/methyl galactoside import ATP-binding protein.